The primary structure comprises 508 residues: Photosystem II CP47 reaction center protein (508 aa).

6 consecutive transmembrane segments (helical) span residues 21–36, 101–115, 140–156, 203–218, 237–252, and 457–472; these read SVHI…WAGS, IVFS…IWHW, GIHL…FGAF, IAAG…FHLS, VLSS…AFVV, and SFAL…HGAR.

The protein belongs to the PsbB/PsbC family. PsbB subfamily. In terms of assembly, PSII is composed of 1 copy each of membrane proteins PsbA, PsbB, PsbC, PsbD, PsbE, PsbF, PsbH, PsbI, PsbJ, PsbK, PsbL, PsbM, PsbT, PsbX, PsbY, PsbZ, Psb30/Ycf12, at least 3 peripheral proteins of the oxygen-evolving complex and a large number of cofactors. It forms dimeric complexes. The cofactor is Binds multiple chlorophylls. PSII binds additional chlorophylls, carotenoids and specific lipids..

Its subcellular location is the plastid. It localises to the chloroplast thylakoid membrane. Its function is as follows. One of the components of the core complex of photosystem II (PSII). It binds chlorophyll and helps catalyze the primary light-induced photochemical processes of PSII. PSII is a light-driven water:plastoquinone oxidoreductase, using light energy to abstract electrons from H(2)O, generating O(2) and a proton gradient subsequently used for ATP formation. This is Photosystem II CP47 reaction center protein from Nymphaea alba (White water-lily).